Reading from the N-terminus, the 620-residue chain is 1-deoxy-D-xylulose-5-phosphate synthase (620 aa).

Thiamine diphosphate contacts are provided by residues His-80 and 121–123; that span reads GHS. Asp-152 is a Mg(2+) binding site. Residues 153 to 154, Asn-181, Tyr-288, and Glu-370 each bind thiamine diphosphate; that span reads GA. Asn-181 serves as a coordination point for Mg(2+).

Belongs to the transketolase family. DXPS subfamily. Homodimer. Mg(2+) serves as cofactor. The cofactor is thiamine diphosphate.

It carries out the reaction D-glyceraldehyde 3-phosphate + pyruvate + H(+) = 1-deoxy-D-xylulose 5-phosphate + CO2. It participates in metabolic intermediate biosynthesis; 1-deoxy-D-xylulose 5-phosphate biosynthesis; 1-deoxy-D-xylulose 5-phosphate from D-glyceraldehyde 3-phosphate and pyruvate: step 1/1. Catalyzes the acyloin condensation reaction between C atoms 2 and 3 of pyruvate and glyceraldehyde 3-phosphate to yield 1-deoxy-D-xylulose-5-phosphate (DXP). The protein is 1-deoxy-D-xylulose-5-phosphate synthase of Pseudoalteromonas translucida (strain TAC 125).